Reading from the N-terminus, the 490-residue chain is MVEQSDRAPLLDWEEIPPAELAPSVPSPDTGDSLQSGLSSYPTEATLGADITLNTSPTRPSSVAAVHSPHKQHSGPGGDALAEEDEPGDCAFHGLSVRDRRITGWEEKDQIVAVFVVTFDTRSGNMIEWCLPHDVNLEGVEFKSMASGSHRISSDFIYFRKGCYFGLACFANMPVESELERGARMKSVGILSPSYTLLYRYMHFLENQVRHQLQCPGQYSPLEAFYEDKKAVLPSGGNGLVTACPTSALAPIVNRCMHPEMKITHPAGCMSQFIRFFGEQIMVLWKFALLRKRILIFSPPPVGVVCYRVYCCCCLANVSIPGMGVSVPEFRPFFYINVADIPALETELSYVACTTEKIFEEKKELYDVYIDNQNVKTHRESLQPLLRLNSADREKYRKLCEQRQLLLYSQEVDGDCTSNEEDLFILFFMEQNNRIFQTLSEVAVSADPTLTAEHVRAMGLDPQGDRGFLVDLLEIYGIDVMLVIDNPCCP.

The tract at residues 1 to 86 (MVEQSDRAPL…GGDALAEEDE (86 aa)) is disordered. One can recognise a uDENN domain in the interval 19–221 (AELAPSVPSP…QLQCPGQYSP (203 aa)). 2 stretches are compositionally biased toward polar residues: residues 30–43 (TGDS…SYPT) and 52–61 (TLNTSPTRPS). The region spanning 249 to 397 (LAPIVNRCMH…LNSADREKYR (149 aa)) is the cDENN domain. Residues 399–490 (LCEQRQLLLY…MLVIDNPCCP (92 aa)) enclose the dDENN domain.

The protein belongs to the DENND11 family.

In terms of biological role, probable guanine nucleotide exchange factor (GEF). May promote the exchange of GDP to GTP, converting inactive GDP-bound small GTPases into their active GTP-bound form. The sequence is that of DENN domain-containing protein 11 (dennd11) from Danio rerio (Zebrafish).